The sequence spans 95 residues: uncharacterized protein (95 aa).

A helical membrane pass occupies residues Ile12 to Ile32.

Its subcellular location is the cell membrane. This is an uncharacterized protein from Escherichia coli O6:H1 (strain CFT073 / ATCC 700928 / UPEC).